The chain runs to 355 residues: Uroporphyrinogen decarboxylase (355 aa).

Residues 27 to 31 (RQAGR), Asp-77, Tyr-154, Thr-209, and His-328 contribute to the substrate site.

It belongs to the uroporphyrinogen decarboxylase family. As to quaternary structure, homodimer.

The protein localises to the cytoplasm. The catalysed reaction is uroporphyrinogen III + 4 H(+) = coproporphyrinogen III + 4 CO2. The protein operates within porphyrin-containing compound metabolism; protoporphyrin-IX biosynthesis; coproporphyrinogen-III from 5-aminolevulinate: step 4/4. Functionally, catalyzes the decarboxylation of four acetate groups of uroporphyrinogen-III to yield coproporphyrinogen-III. This Aliivibrio fischeri (strain ATCC 700601 / ES114) (Vibrio fischeri) protein is Uroporphyrinogen decarboxylase.